The chain runs to 379 residues: Chaperone protein DnaJ (379 aa).

In terms of domain architecture, J spans 4 to 69 (DLYETLGVKK…QKRAAYDRYG (66 aa)). Residues 137–215 (GKTAQIRVPT…CHGQGRVTEE (79 aa)) form a CR-type zinc finger. 8 residues coordinate Zn(2+): cysteine 150, cysteine 153, cysteine 167, cysteine 170, cysteine 189, cysteine 192, cysteine 203, and cysteine 206. CXXCXGXG motif repeat units follow at residues 150-157 (CDVCTGSG), 167-174 (CATCQGSG), 189-196 (CPTCGGRG), and 203-210 (CTKCHGQG).

It belongs to the DnaJ family. Homodimer. The cofactor is Zn(2+).

Its subcellular location is the cytoplasm. Its function is as follows. Participates actively in the response to hyperosmotic and heat shock by preventing the aggregation of stress-denatured proteins and by disaggregating proteins, also in an autonomous, DnaK-independent fashion. Unfolded proteins bind initially to DnaJ; upon interaction with the DnaJ-bound protein, DnaK hydrolyzes its bound ATP, resulting in the formation of a stable complex. GrpE releases ADP from DnaK; ATP binding to DnaK triggers the release of the substrate protein, thus completing the reaction cycle. Several rounds of ATP-dependent interactions between DnaJ, DnaK and GrpE are required for fully efficient folding. Also involved, together with DnaK and GrpE, in the DNA replication of plasmids through activation of initiation proteins. This is Chaperone protein DnaJ from Sinorhizobium fredii (strain NBRC 101917 / NGR234).